The primary structure comprises 138 residues: MEKFLKPNKAVILLQGKYAGRKAVIVRAFDEGTRDRPYGHCLVAGISRYPKKVIRKDSAKKAGKKSRVKAFIKLVNYNHIMPTRYTLDEDLKDVVKDVVNADVLQARDKKVTARRTKARLAERFKTGKNRWFFTKLRF.

It belongs to the eukaryotic ribosomal protein eL27 family.

This is Large ribosomal subunit protein eL27 (RPL27) from Solanum tuberosum (Potato).